The chain runs to 248 residues: Probable transcriptional regulatory protein BRADO1143 (248 aa).

Belongs to the TACO1 family.

The protein localises to the cytoplasm. This Bradyrhizobium sp. (strain ORS 278) protein is Probable transcriptional regulatory protein BRADO1143.